Consider the following 274-residue polypeptide: MNKTAIALLALLASSVSLAATPWQKITQPVPGSAQSIGSFSNGCIVGADTLPIQSEHYQVMRTDQRRYFGHPDLVMFIQRLSSQVSNLGMGTVLIGDMGMPAGGRFNGGHASHQTGLDVDIFLQLPKTRRTSAQLLRPQALDLVSRDGKHVVSTLWKPEIFSLIKLAAQDKDVTRIFVNPAIKQQLCLDAGTDRDWLRKVRPWFQHRAHMHVRLRCPADSLECEDQPLPPPGDGCGAELQSWFEPPKPGTTKPEKKTPPPLPPSCQALLDEHVI.

An N-terminal signal peptide occupies residues 1–19 (MNKTAIALLALLASSVSLA). 3 disulfides stabilise this stretch: C44–C265, C187–C235, and C216–C223. Residues H110, H113, D120, D147, H150, and H211 each contribute to the Zn(2+) site. Residues 227-274 (PLPPPGDGCGAELQSWFEPPKPGTTKPEKKTPPPLPPSCQALLDEHVI) are disordered.

This sequence belongs to the peptidase M74 family. Dimer. The cofactor is Zn(2+).

The protein resides in the periplasm. Its function is as follows. Murein endopeptidase that cleaves the D-alanyl-meso-2,6-diamino-pimelyl amide bond that connects peptidoglycan strands. Likely plays a role in the removal of murein from the sacculus. In Escherichia coli O157:H7, this protein is Penicillin-insensitive murein endopeptidase.